The sequence spans 551 residues: CTP synthase (551 aa).

The tract at residues 1-265 (MTRYLFITGG…DHIVAEKWGL (265 aa)) is amidoligase domain. A CTP-binding site is contributed by serine 13. A UTP-binding site is contributed by serine 13. Residues 14-19 (SLGKGI) and aspartate 71 contribute to the ATP site. 2 residues coordinate Mg(2+): aspartate 71 and glutamate 139. Residues 146–148 (DIE), 186–191 (KTKPTQ), and lysine 222 contribute to the CTP site. UTP contacts are provided by residues 186–191 (KTKPTQ) and lysine 222. Residues 290 to 541 (TVAMVGKYVD…LRAAIAHRDG (252 aa)) enclose the Glutamine amidotransferase type-1 domain. Residue glycine 351 participates in L-glutamine binding. Residue cysteine 378 is the Nucleophile; for glutamine hydrolysis of the active site. L-glutamine contacts are provided by residues 379–382 (LGMQ), glutamate 402, and arginine 469. Catalysis depends on residues histidine 514 and glutamate 516.

This sequence belongs to the CTP synthase family. As to quaternary structure, homotetramer.

It carries out the reaction UTP + L-glutamine + ATP + H2O = CTP + L-glutamate + ADP + phosphate + 2 H(+). It catalyses the reaction L-glutamine + H2O = L-glutamate + NH4(+). The catalysed reaction is UTP + NH4(+) + ATP = CTP + ADP + phosphate + 2 H(+). It participates in pyrimidine metabolism; CTP biosynthesis via de novo pathway; CTP from UDP: step 2/2. With respect to regulation, allosterically activated by GTP, when glutamine is the substrate; GTP has no effect on the reaction when ammonia is the substrate. The allosteric effector GTP functions by stabilizing the protein conformation that binds the tetrahedral intermediate(s) formed during glutamine hydrolysis. Inhibited by the product CTP, via allosteric rather than competitive inhibition. Functionally, catalyzes the ATP-dependent amination of UTP to CTP with either L-glutamine or ammonia as the source of nitrogen. Regulates intracellular CTP levels through interactions with the four ribonucleotide triphosphates. The protein is CTP synthase of Halorhodospira halophila (strain DSM 244 / SL1) (Ectothiorhodospira halophila (strain DSM 244 / SL1)).